Here is a 260-residue protein sequence, read N- to C-terminus: uncharacterized protein (260 aa).

Positions 1-22 (MKSIKRIGLCISLLILIIFATS) are cleaved as a signal peptide. C23 carries N-palmitoyl cysteine lipidation. A lipid anchor (S-diacylglycerol cysteine) is attached at C23.

The protein belongs to the staphylococcal tandem lipoprotein family.

It is found in the cell membrane. This is an uncharacterized protein from Staphylococcus aureus (strain N315).